The sequence spans 253 residues: 1-(5-phosphoribosyl)-5-[(5-phosphoribosylamino)methylideneamino] imidazole-4-carboxamide isomerase (253 aa).

Catalysis depends on D8, which acts as the Proton acceptor. D129 functions as the Proton donor in the catalytic mechanism.

It belongs to the HisA/HisF family.

Its subcellular location is the cytoplasm. It catalyses the reaction 1-(5-phospho-beta-D-ribosyl)-5-[(5-phospho-beta-D-ribosylamino)methylideneamino]imidazole-4-carboxamide = 5-[(5-phospho-1-deoxy-D-ribulos-1-ylimino)methylamino]-1-(5-phospho-beta-D-ribosyl)imidazole-4-carboxamide. It participates in amino-acid biosynthesis; L-histidine biosynthesis; L-histidine from 5-phospho-alpha-D-ribose 1-diphosphate: step 4/9. This is 1-(5-phosphoribosyl)-5-[(5-phosphoribosylamino)methylideneamino] imidazole-4-carboxamide isomerase from Microcystis aeruginosa (strain NIES-843 / IAM M-2473).